We begin with the raw amino-acid sequence, 40 residues long: Antifungal protein ginkbilobin-1 (40 aa).

A Gnk2-homologous domain is found at 3 to 40; that stretch reads TAFVSSAHNTQKIPAGAPFNRNLRAMLADLRQNAAFAG. Asn11 is a binding site for alpha-D-mannopyranose.

As to expression, expressed in seeds (at the protein level).

Its function is as follows. Possesses antifungal activity against B.cinerea, M.arachidicola, F.oxysporum, R.solani and C.comatus and moderate antibacterial activity against S.aureus, P.aeruginosa and E.coli. Inhibits HIV-1 reverse transcriptase and proliferation of murine splenocytes. Exerts antifungal activity through its carbohydrate-binding specificity. This Ginkgo biloba (Ginkgo) protein is Antifungal protein ginkbilobin-1.